A 141-amino-acid chain; its full sequence is Hemoglobin subunit alpha (141 aa).

Residues 1–141 (VLSSKDKANV…VSTVLTSKYR (141 aa)) enclose the Globin domain. S3 carries the post-translational modification Phosphoserine. Residues K7 and K11 each carry the N6-succinyllysine modification. K16 bears the N6-acetyllysine; alternate mark. Residue K16 is modified to N6-succinyllysine; alternate. Y24 bears the Phosphotyrosine mark. K40 is subject to N6-succinyllysine. At S49 the chain carries Phosphoserine. H58 provides a ligand contact to O2. Position 87 (H87) interacts with heme b. Phosphoserine is present on S102. T108 bears the Phosphothreonine mark. S124 carries the post-translational modification Phosphoserine. Phosphothreonine is present on residues T134 and T137. Residue S138 is modified to Phosphoserine.

It belongs to the globin family. In terms of assembly, heterotetramer of two alpha chains and two beta chains. In terms of tissue distribution, red blood cells.

Its function is as follows. Involved in oxygen transport from the lung to the various peripheral tissues. Functionally, hemopressin acts as an antagonist peptide of the cannabinoid receptor CNR1. Hemopressin-binding efficiently blocks cannabinoid receptor CNR1 and subsequent signaling. This chain is Hemoglobin subunit alpha (HBA), found in Lama vicugna (Vicugna).